Here is a 464-residue protein sequence, read N- to C-terminus: GTPase Der (464 aa).

2 EngA-type G domains span residues 5 to 169 and 190 to 368; these read PTIA…KQKG and IKVA…RESH. Residues 11 to 18, 58 to 62, 121 to 124, 196 to 203, 243 to 247, and 308 to 311 contribute to the GTP site; these read GRPNVGKS, DTGGI, NKAD, GRPNAGKS, DTAGM, and NKFD. The KH-like domain maps to 369–461; sequence NLPTTGQLNR…PVIFSARSRV (93 aa).

Belongs to the TRAFAC class TrmE-Era-EngA-EngB-Septin-like GTPase superfamily. EngA (Der) GTPase family. In terms of assembly, associates with the 50S ribosomal subunit.

Its function is as follows. GTPase that plays an essential role in the late steps of ribosome biogenesis. The chain is GTPase Der from Akkermansia muciniphila (strain ATCC BAA-835 / DSM 22959 / JCM 33894 / BCRC 81048 / CCUG 64013 / CIP 107961 / Muc).